A 160-amino-acid chain; its full sequence is Transcription elongation factor GreA (160 aa).

Positions 10–37 (TLEGKAKLENELQELKTVKRKEVVERIK) form a coiled coil.

Belongs to the GreA/GreB family.

Its function is as follows. Necessary for efficient RNA polymerase transcription elongation past template-encoded arresting sites. The arresting sites in DNA have the property of trapping a certain fraction of elongating RNA polymerases that pass through, resulting in locked ternary complexes. Cleavage of the nascent transcript by cleavage factors such as GreA or GreB allows the resumption of elongation from the new 3'terminus. GreA releases sequences of 2 to 3 nucleotides. The sequence is that of Transcription elongation factor GreA from Listeria welshimeri serovar 6b (strain ATCC 35897 / DSM 20650 / CCUG 15529 / CIP 8149 / NCTC 11857 / SLCC 5334 / V8).